Consider the following 428-residue polypeptide: Ectonucleoside triphosphate diphosphohydrolase 5 (428 aa).

Positions 1 to 24 are cleaved as a signal peptide; that stretch reads MTSSRLPVLLALVFSSLSPVLSHS. Glutamate 172 acts as the Proton acceptor in catalysis. A glycan (N-linked (GlcNAc...) asparagine) is linked at asparagine 232. Cystine bridges form between cysteine 272–cysteine 303 and cysteine 363–cysteine 377.

Belongs to the GDA1/CD39 NTPase family. Monomer; active form. Homodimer; disulfide-linked. Homodimers are enzymatically inactive. Ca(2+) serves as cofactor. Mg(2+) is required as a cofactor.

Its subcellular location is the endoplasmic reticulum. It is found in the secreted. The enzyme catalyses a ribonucleoside 5'-diphosphate + H2O = a ribonucleoside 5'-phosphate + phosphate + H(+). It carries out the reaction GDP + H2O = GMP + phosphate + H(+). It catalyses the reaction UDP + H2O = UMP + phosphate + H(+). The catalysed reaction is IDP + H2O = IMP + phosphate + H(+). The enzyme catalyses CDP + H2O = CMP + phosphate + H(+). It carries out the reaction ADP + H2O = AMP + phosphate + H(+). It participates in protein modification; protein glycosylation. In terms of biological role, hydrolyzes nucleoside diphosphates with a preference for GDP, IDP and UDP compared to ADP and CDP. In the lumen of the endoplasmic reticulum, hydrolyzes UDP that acts as an end-product feedback inhibitor of the UDP-Glc:glycoprotein glucosyltransferases. UMP can be transported back by an UDP-sugar antiporter to the cytosol where it is consumed to regenerate UDP-glucose. Therefore, it positively regulates protein reglucosylation by clearing UDP from the ER lumen and by promoting the regeneration of UDP-glucose. Protein reglucosylation is essential to proper glycoprotein folding and quality control in the ER. This is Ectonucleoside triphosphate diphosphohydrolase 5 (ENTPD5) from Gallus gallus (Chicken).